Consider the following 371-residue polypeptide: Transaldolase (371 aa).

Lys-140 serves as the catalytic Schiff-base intermediate with substrate.

The protein belongs to the transaldolase family. Type 2 subfamily.

It is found in the cytoplasm. The enzyme catalyses D-sedoheptulose 7-phosphate + D-glyceraldehyde 3-phosphate = D-erythrose 4-phosphate + beta-D-fructose 6-phosphate. Its pathway is carbohydrate degradation; pentose phosphate pathway; D-glyceraldehyde 3-phosphate and beta-D-fructose 6-phosphate from D-ribose 5-phosphate and D-xylulose 5-phosphate (non-oxidative stage): step 2/3. In terms of biological role, transaldolase is important for the balance of metabolites in the pentose-phosphate pathway. In Arthrobacter sp. (strain FB24), this protein is Transaldolase.